Reading from the N-terminus, the 558-residue chain is Scarecrow-like protein 6 (558 aa).

A disordered region spans residues 19 to 90; sequence FSSSFPQPPS…GGDATTDEQC (72 aa). Residues 54–75 are compositionally biased toward low complexity; the sequence is SVLDSLISPTSSSTVSSSHGGN. Positions 196 to 554 constitute a GRAS domain; sequence KRLNPGPVGI…TELVGVSAWR (359 aa). The leucine repeat I (LRI) stretch occupies residues 203 to 257; it reads VGITEQLVKAAEVIESDTCLAQGILARLNQQLSSPVGKPLERAAFYFKEALNNLL. The segment at 276-340 is VHIID; it reads YKSFSEISPV…DNAAPLSLKI (65 aa). Residues 307 to 311 carry the VHIID motif; that stretch reads LHIID. The segment at 356–388 is leucine repeat II (LRII); sequence FTQDNLKHFASEINISLDIQVLSLDLLGSISWP. Positions 396 to 479 are PFYRE; that stretch reads VAVNISAASF…RFLIQPEIEK (84 aa). An SAW region spans residues 482-554; that stretch reads LDRSRPIERP…TELVGVSAWR (73 aa).

Belongs to the GRAS family. Interacts with Meloidogyne incognita 16D10. Expressed in seedlings, roots, leaves, flowers and siliques.

The protein localises to the nucleus. Probable transcription factor involved in plant development. This chain is Scarecrow-like protein 6 (SCL6), found in Arabidopsis thaliana (Mouse-ear cress).